We begin with the raw amino-acid sequence, 297 residues long: Probable endonuclease 4 (297 aa).

Zn(2+) contacts are provided by His68, His109, Glu144, Asp178, His181, His213, Asp226, His228, and Glu258.

Belongs to the AP endonuclease 2 family. The cofactor is Zn(2+).

It catalyses the reaction Endonucleolytic cleavage to 5'-phosphooligonucleotide end-products.. Endonuclease IV plays a role in DNA repair. It cleaves phosphodiester bonds at apurinic or apyrimidinic (AP) sites, generating a 3'-hydroxyl group and a 5'-terminal sugar phosphate. The polypeptide is Probable endonuclease 4 (Enterococcus faecalis (strain ATCC 700802 / V583)).